A 298-amino-acid polypeptide reads, in one-letter code: Tyrosine recombinase XerC (298 aa).

Residues 2 to 88 form the Core-binding (CB) domain; that stretch reads TDLHTDVERY…ALRSFFDWLV (87 aa). Positions 109-288 constitute a Tyr recombinase domain; sequence HLPKNIDVDD…DFQHLASVYD (180 aa). Catalysis depends on residues R148, K172, H240, R243, and H266. Y275 acts as the O-(3'-phospho-DNA)-tyrosine intermediate in catalysis.

Belongs to the 'phage' integrase family. XerC subfamily. In terms of assembly, forms a cyclic heterotetrameric complex composed of two molecules of XerC and two molecules of XerD, in which XerC interacts with XerD via its C-terminal region, XerD interacts with XerC via its C-terminal region and so on.

The protein localises to the cytoplasm. With respect to regulation, ftsK may regulate the catalytic switch between XerC and XerD in the heterotetrameric complex during the two steps of the recombination process. In terms of biological role, site-specific tyrosine recombinase, which acts by catalyzing the cutting and rejoining of the recombining DNA molecules. Binds cooperatively to specific DNA consensus sequences that are separated from XerD binding sites by a short central region, forming the heterotetrameric XerC-XerD complex that recombines DNA substrates. The complex is essential to convert dimers of the bacterial chromosome into monomers to permit their segregation at cell division. It also contributes to the segregational stability of plasmids. In the complex XerC specifically exchanges the top DNA strands. The chain is Tyrosine recombinase XerC from Shigella flexneri serotype 5b (strain 8401).